The sequence spans 409 residues: Dual-specificity RNA methyltransferase RlmN (409 aa).

The active-site Proton acceptor is glutamate 121. The 250-residue stretch at 127–376 folds into the Radical SAM core domain; the sequence is EEGRGTLCIS…IRTPRGRDIL (250 aa). Cysteine 134 and cysteine 379 form a disulfide bridge. Residues cysteine 141, cysteine 145, and cysteine 148 each contribute to the [4Fe-4S] cluster site. Residues 205–206, serine 237, 259–261, and asparagine 336 each bind S-adenosyl-L-methionine; these read GE and SLH. Cysteine 379 serves as the catalytic S-methylcysteine intermediate.

This sequence belongs to the radical SAM superfamily. RlmN family. It depends on [4Fe-4S] cluster as a cofactor.

The protein resides in the cytoplasm. The catalysed reaction is adenosine(2503) in 23S rRNA + 2 reduced [2Fe-2S]-[ferredoxin] + 2 S-adenosyl-L-methionine = 2-methyladenosine(2503) in 23S rRNA + 5'-deoxyadenosine + L-methionine + 2 oxidized [2Fe-2S]-[ferredoxin] + S-adenosyl-L-homocysteine. It catalyses the reaction adenosine(37) in tRNA + 2 reduced [2Fe-2S]-[ferredoxin] + 2 S-adenosyl-L-methionine = 2-methyladenosine(37) in tRNA + 5'-deoxyadenosine + L-methionine + 2 oxidized [2Fe-2S]-[ferredoxin] + S-adenosyl-L-homocysteine. Its function is as follows. Specifically methylates position 2 of adenine 2503 in 23S rRNA and position 2 of adenine 37 in tRNAs. m2A2503 modification seems to play a crucial role in the proofreading step occurring at the peptidyl transferase center and thus would serve to optimize ribosomal fidelity. The chain is Dual-specificity RNA methyltransferase RlmN from Rhizobium etli (strain ATCC 51251 / DSM 11541 / JCM 21823 / NBRC 15573 / CFN 42).